We begin with the raw amino-acid sequence, 243 residues long: Phosphoribosyl isomerase A (243 aa).

Asp9 serves as the catalytic Proton acceptor. Asp128 serves as the catalytic Proton donor.

This sequence belongs to the HisA/HisF family.

It is found in the cytoplasm. The catalysed reaction is 1-(5-phospho-beta-D-ribosyl)-5-[(5-phospho-beta-D-ribosylamino)methylideneamino]imidazole-4-carboxamide = 5-[(5-phospho-1-deoxy-D-ribulos-1-ylimino)methylamino]-1-(5-phospho-beta-D-ribosyl)imidazole-4-carboxamide. The enzyme catalyses N-(5-phospho-beta-D-ribosyl)anthranilate = 1-(2-carboxyphenylamino)-1-deoxy-D-ribulose 5-phosphate. Its pathway is amino-acid biosynthesis; L-histidine biosynthesis; L-histidine from 5-phospho-alpha-D-ribose 1-diphosphate: step 4/9. The protein operates within amino-acid biosynthesis; L-tryptophan biosynthesis; L-tryptophan from chorismate: step 3/5. Its function is as follows. Involved in both the histidine and tryptophan biosynthetic pathways. The polypeptide is Phosphoribosyl isomerase A (Mycobacterium avium (strain 104)).